The following is a 538-amino-acid chain: Nucleolar protein 12 (538 aa).

5 disordered regions span residues 1–25, 41–203, 336–378, 433–455, and 476–538; these read MGKKSKAQSDNVSQPGKTDVTLPFL, KSAG…KSNR, ETDP…ASTR, AKKLPKKRDGPETGSHGKALGEG, and KAEG…KMAK. Positions 63-92 are enriched in acidic residues; the sequence is PEDDVEKEEDDEEISELEEDLQSEDEDMQD. Residues 64-156 are a coiled coil; that stretch reads EDDVEKEEDD…KAKRQKVEEG (93 aa). Basic and acidic residues-rich tracts occupy residues 127 to 144, 151 to 173, and 182 to 202; these read TYMRRIAKEEQKEQEKRR, QKVEEGGKDSDPVSDKSKDGRDE, and TVPRHETQSGDPESKELEKSN. RRM domains follow at residues 203 to 315 and 323 to 435; these read RTVF…SVAH and RCVF…RAKK. Residues 502–521 are compositionally biased toward basic residues; it reads IKIKTKSRGSKGKPKNRSAK.

The protein belongs to the RRM RBM34 family.

The protein resides in the nucleus. It is found in the nucleolus. Involved in pre-25S rRNA processing. This Aspergillus fumigatus (strain ATCC MYA-4609 / CBS 101355 / FGSC A1100 / Af293) (Neosartorya fumigata) protein is Nucleolar protein 12 (nop12).